Reading from the N-terminus, the 421-residue chain is Ankyrin repeat and SOCS box protein 6 (421 aa).

ANK repeat units follow at residues 67-97, 102-131, 136-166, 170-205, 226-255, and 260-289; these read EGVS…NLNF, TYYT…DINR, HESS…DVNA, HGKT…DVKA, GGDK…DPSE, and ESLT…AYNC. The 56-residue stretch at 360 to 415 folds into the SOCS box domain; that stretch reads ALHFSLRQLESYPPPLKHLCRVAIRLYLQPWPVDVKVKALPLPDRLKWYLLSEHSG.

The protein belongs to the ankyrin SOCS box (ASB) family. In terms of assembly, binds APS. Identified in a complex with ELOB and ELOC. Interacts with CUL5 and RNF7. Interacts with SQSTM1.

The protein localises to the cytoplasm. It functions in the pathway protein modification; protein ubiquitination. Its function is as follows. Probable substrate-recognition component of a SCF-like ECS (Elongin-Cullin-SOCS-box protein) E3 ubiquitin-protein ligase complex which mediates the ubiquitination and subsequent proteasomal degradation of target proteins. May play a role in the regulation of cell proliferation and autophagy by promoting the ubiquitination and degradation of SQSTM1. The protein is Ankyrin repeat and SOCS box protein 6 (ASB6) of Pongo abelii (Sumatran orangutan).